We begin with the raw amino-acid sequence, 215 residues long: Chaperone protein TorD (215 aa).

This sequence belongs to the TorD/DmsD family. TorD subfamily.

It localises to the cytoplasm. Its function is as follows. Involved in the biogenesis of TorA. Acts on TorA before the insertion of the molybdenum cofactor and, as a result, probably favors a conformation of the apoenzyme that is competent for acquiring the cofactor. In Shewanella piezotolerans (strain WP3 / JCM 13877), this protein is Chaperone protein TorD.